The sequence spans 671 residues: MEPIEQQLTELRTTLRHHEYLYHVMDAPEIPDAEYDRLMRELRELEAQRPDLITPDSPTQRVGAAPLTAFNQIRHEVPMLSLDNVFDEESFLAFNKRVQDRLKSTENVIWCCELKLDGLAVSILYENGVLVSAATRGDGTTGEDITSNVRTIRAIPLKLHGDNIPARLEVRGEVFLPQAGFEKINEDARRTGGKVFANPRNAAAGSLRQLDPRITAKRPLTFFCYGVGILEGGELPDTHLGRLLQFKAWGLPVSDRVTLCDSPQAVLDFYRNVEKDRPTLGFDIDGVVIKVNSLALQEQLGFVARAPRWAVAFKFPAQEQMTFVRDVEFQVGRTGAITPVARLEPVQVAGVLVSNATLHNADEIERLGLRIGDKVVIRRAGDVIPQVVNVVLSERPEETRPIVFPTHCPVCGSDVERVEGEAVTRCTGGLICGAQRKESLKHFVSRRAMDVDGMGDKIIDQLVEREYVHTPADLFRLTAGKLTGLDRMGPKSAQNVVNALEKAKATTFARFLYALGIREVGEATAAGLAAYFGTLEALQTATIDELQKVPDVGIVVATHVFNFFAEESNRDVIGQLLAEGVHWPAPVVINVQEIDSPFAGKTVVLTGSLSQMSRDDAKARLAALGAKVAGSVSKKTDLVIAGEAAGSKLAKAQELGITVIDEAEMIRLLGA.

NAD(+) contacts are provided by residues Asp32 to Asp36, Ser81 to Leu82, and Glu113. Lys115 (N6-AMP-lysine intermediate) is an active-site residue. The NAD(+) site is built by Arg136, Glu173, Lys290, and Lys314. Residues Cys408, Cys411, Cys426, and Cys432 each coordinate Zn(2+). The BRCT domain occupies Glu593–Ala671.

Belongs to the NAD-dependent DNA ligase family. LigA subfamily. It depends on Mg(2+) as a cofactor. Mn(2+) is required as a cofactor.

It carries out the reaction NAD(+) + (deoxyribonucleotide)n-3'-hydroxyl + 5'-phospho-(deoxyribonucleotide)m = (deoxyribonucleotide)n+m + AMP + beta-nicotinamide D-nucleotide.. In terms of biological role, DNA ligase that catalyzes the formation of phosphodiester linkages between 5'-phosphoryl and 3'-hydroxyl groups in double-stranded DNA using NAD as a coenzyme and as the energy source for the reaction. It is essential for DNA replication and repair of damaged DNA. The polypeptide is DNA ligase (Salmonella heidelberg (strain SL476)).